We begin with the raw amino-acid sequence, 313 residues long: Ribosomal RNA small subunit methyltransferase H (313 aa).

Residues 35-37, aspartate 55, phenylalanine 81, aspartate 103, and glutamine 110 contribute to the S-adenosyl-L-methionine site; that span reads GGH.

The protein belongs to the methyltransferase superfamily. RsmH family.

Its subcellular location is the cytoplasm. The catalysed reaction is cytidine(1402) in 16S rRNA + S-adenosyl-L-methionine = N(4)-methylcytidine(1402) in 16S rRNA + S-adenosyl-L-homocysteine + H(+). Functionally, specifically methylates the N4 position of cytidine in position 1402 (C1402) of 16S rRNA. This is Ribosomal RNA small subunit methyltransferase H from Pseudomonas syringae pv. syringae (strain B728a).